Here is a 402-residue protein sequence, read N- to C-terminus: Acyl-[acyl-carrier-protein] desaturase 3, chloroplastic (402 aa).

Disordered regions lie at residues 1–25 (MSLT…GGAS) and 38–66 (VGGI…THTL). The transit peptide at 1–32 (MSLTGCLPPRPPCSMRRRTSGGGASVSPVVVM) directs the protein to the chloroplast. Residues glutamate 139, glutamate 178, histidine 181, glutamate 231, glutamate 264, and histidine 267 each contribute to the Fe cation site.

The protein belongs to the fatty acid desaturase type 2 family. In terms of assembly, homodimer. Fe(2+) is required as a cofactor.

It localises to the plastid. The protein localises to the chloroplast. It functions in the pathway lipid metabolism; fatty acid metabolism. Functionally, introduces a cis double bond in the acyl chain of an acyl-[acyl-carrier protein]. The protein is Acyl-[acyl-carrier-protein] desaturase 3, chloroplastic of Oryza sativa subsp. indica (Rice).